The chain runs to 196 residues: Proteasome subunit beta (196 aa).

Position 1 (M1) is a propeptide, removed in mature form; by autocatalysis. Residue T2 is the Nucleophile of the active site.

The protein belongs to the peptidase T1B family. The 20S proteasome core is composed of 14 alpha and 14 beta subunits that assemble into four stacked heptameric rings, resulting in a barrel-shaped structure. The two inner rings, each composed of seven catalytic beta subunits, are sandwiched by two outer rings, each composed of seven alpha subunits. The catalytic chamber with the active sites is on the inside of the barrel. Has a gated structure, the ends of the cylinder being occluded by the N-termini of the alpha-subunits. Is capped at one or both ends by the proteasome regulatory ATPase, PAN.

It is found in the cytoplasm. It carries out the reaction Cleavage of peptide bonds with very broad specificity.. With respect to regulation, the formation of the proteasomal ATPase PAN-20S proteasome complex, via the docking of the C-termini of PAN into the intersubunit pockets in the alpha-rings, triggers opening of the gate for substrate entry. Interconversion between the open-gate and close-gate conformations leads to a dynamic regulation of the 20S proteasome proteolysis activity. Functionally, component of the proteasome core, a large protease complex with broad specificity involved in protein degradation. The chain is Proteasome subunit beta from Nanoarchaeum equitans (strain Kin4-M).